Here is a 526-residue protein sequence, read N- to C-terminus: Peptide chain release factor 3 (526 aa).

A tr-type G domain is found at 8–277; sequence DKRRTFAIIS…GLTQWAPKPQ (270 aa). GTP-binding positions include 17–24, 85–89, and 139–142; these read SHPDAGKT, DTPGH, and NKLD.

The protein belongs to the TRAFAC class translation factor GTPase superfamily. Classic translation factor GTPase family. PrfC subfamily.

It is found in the cytoplasm. In terms of biological role, increases the formation of ribosomal termination complexes and stimulates activities of RF-1 and RF-2. It binds guanine nucleotides and has strong preference for UGA stop codons. It may interact directly with the ribosome. The stimulation of RF-1 and RF-2 is significantly reduced by GTP and GDP, but not by GMP. The polypeptide is Peptide chain release factor 3 (Actinobacillus succinogenes (strain ATCC 55618 / DSM 22257 / CCUG 43843 / 130Z)).